We begin with the raw amino-acid sequence, 182 residues long: Oligoribonuclease (182 aa).

In terms of domain architecture, Exonuclease spans Leu8–Leu171. Residue Tyr129 is part of the active site.

It belongs to the oligoribonuclease family.

It is found in the cytoplasm. 3'-to-5' exoribonuclease specific for small oligoribonucleotides. The sequence is that of Oligoribonuclease from Haemophilus influenzae (strain PittGG).